The sequence spans 98 residues: Cell cycle protein GpsB (98 aa).

Residues 34–72 are a coiled coil; it reads LDMVIKDYEAFHQEIEELQQENLQLKKQLEEANKRQPAQ.

This sequence belongs to the GpsB family. As to quaternary structure, forms polymers through the coiled coil domains. Interacts with PBP1, MreC and EzrA.

It localises to the cytoplasm. In terms of biological role, divisome component that associates with the complex late in its assembly, after the Z-ring is formed, and is dependent on DivIC and PBP2B for its recruitment to the divisome. Together with EzrA, is a key component of the system that regulates PBP1 localization during cell cycle progression. Its main role could be the removal of PBP1 from the cell pole after pole maturation is completed. Also contributes to the recruitment of PBP1 to the division complex. Not essential for septum formation. In Bacillus licheniformis (strain ATCC 14580 / DSM 13 / JCM 2505 / CCUG 7422 / NBRC 12200 / NCIMB 9375 / NCTC 10341 / NRRL NRS-1264 / Gibson 46), this protein is Cell cycle protein GpsB.